We begin with the raw amino-acid sequence, 455 residues long: ATP-dependent protease ATPase subunit HslU (455 aa).

ATP is bound by residues valine 23, 65-70 (GVGKTE), aspartate 266, glutamate 333, and arginine 405.

The protein belongs to the ClpX chaperone family. HslU subfamily. As to quaternary structure, a double ring-shaped homohexamer of HslV is capped on each side by a ring-shaped HslU homohexamer. The assembly of the HslU/HslV complex is dependent on binding of ATP.

Its subcellular location is the cytoplasm. In terms of biological role, ATPase subunit of a proteasome-like degradation complex; this subunit has chaperone activity. The binding of ATP and its subsequent hydrolysis by HslU are essential for unfolding of protein substrates subsequently hydrolyzed by HslV. HslU recognizes the N-terminal part of its protein substrates and unfolds these before they are guided to HslV for hydrolysis. In Xanthomonas oryzae pv. oryzae (strain MAFF 311018), this protein is ATP-dependent protease ATPase subunit HslU.